A 455-amino-acid chain; its full sequence is Ribulose bisphosphate carboxylase large chain (455 aa).

K5 carries the post-translational modification N6,N6,N6-trimethyllysine. The substrate site is built by N114 and T164. The active-site Proton acceptor is K166. K168 is a substrate binding site. Mg(2+) contacts are provided by K192, D194, and E195. At K192 the chain carries N6-carboxylysine. H285 functions as the Proton acceptor in the catalytic mechanism. The substrate site is built by R286, H318, and S370.

The protein belongs to the RuBisCO large chain family. Type I subfamily. As to quaternary structure, heterohexadecamer of 8 large chains and 8 small chains; disulfide-linked. The disulfide link is formed within the large subunit homodimers. The cofactor is Mg(2+). Post-translationally, the disulfide bond which can form in the large chain dimeric partners within the hexadecamer appears to be associated with oxidative stress and protein turnover.

The protein resides in the plastid. The protein localises to the chloroplast. It catalyses the reaction 2 (2R)-3-phosphoglycerate + 2 H(+) = D-ribulose 1,5-bisphosphate + CO2 + H2O. The catalysed reaction is D-ribulose 1,5-bisphosphate + O2 = 2-phosphoglycolate + (2R)-3-phosphoglycerate + 2 H(+). Functionally, ruBisCO catalyzes two reactions: the carboxylation of D-ribulose 1,5-bisphosphate, the primary event in carbon dioxide fixation, as well as the oxidative fragmentation of the pentose substrate in the photorespiration process. Both reactions occur simultaneously and in competition at the same active site. This is Ribulose bisphosphate carboxylase large chain from Lupinus paraguariensis (Lupine).